The chain runs to 690 residues: Serotransferrin-1 (690 aa).

The first 18 residues, M1–A18, serve as a signal peptide directing secretion. 2 Transferrin-like domains span residues V25–K329 and I340–K669. C28 and C50 are joined by a disulfide. 2 residues coordinate Fe(3+): D74 and Y104. Cystine bridges form between C127–C207, C172–C186, and C235–C249. Hydrogencarbonate is bound by residues T129, S134, G136, and W137. N169 carries an N-linked (GlcNAc...) asparagine glycan. Fe(3+) is bound at residue Y201. H257 contributes to the Fe(3+) binding site. 2 disulfides stabilise this stretch: C343–C379 and C353–C370. Residues D394 and Y428 each contribute to the Fe(3+) site. 7 disulfides stabilise this stretch: C404–C681, C419–C642, C451–C529, C475–C670, C485–C499, C496–C512, and C569–C583. The hydrogencarbonate site is built by T453, R457, A459, and G460. Y523 is a binding site for Fe(3+). H591 serves as a coordination point for Fe(3+).

It belongs to the transferrin family. In terms of assembly, monomer. As to expression, abundant in liver and serum with smaller amounts found in the stomach and kidney.

The protein resides in the secreted. Its function is as follows. Transferrins are iron binding transport proteins which can bind two Fe(3+) ions in association with the binding of an anion, usually bicarbonate. It is responsible for the transport of iron from sites of absorption and heme degradation to those of storage and utilization. Serum transferrin may also have a further role in stimulating cell proliferation. The protein is Serotransferrin-1 (tf1) of Salmo salar (Atlantic salmon).